We begin with the raw amino-acid sequence, 180 residues long: MQEKAVVLDDQMIRRALTRISHEIVERNKGVDNCVLVGIKTRGIFIAQRLAERIGQIEGKEIEVGELDITLYRDDLTLQSKNKEPLVKGSDIPVDITKKKVILVDDVLYTGRTVRAAMDALMDLGRPSQIQLAVLVDRGHRELPIRADYVGKNIPTSSEERIEVDLQETDQQDRVSIYDK.

Residues 101–113 carry the PRPP-binding motif; that stretch reads VILVDDVLYTGRT.

The protein belongs to the purine/pyrimidine phosphoribosyltransferase family. PyrR subfamily. In terms of assembly, homodimer and homohexamer; in equilibrium.

The catalysed reaction is UMP + diphosphate = 5-phospho-alpha-D-ribose 1-diphosphate + uracil. Its function is as follows. Regulates transcriptional attenuation of the pyrimidine nucleotide (pyr) operon by binding in a uridine-dependent manner to specific sites on pyr mRNA. This disrupts an antiterminator hairpin in the RNA and favors formation of a downstream transcription terminator, leading to a reduced expression of downstream genes. Functionally, also displays a weak uracil phosphoribosyltransferase activity which is not physiologically significant. The polypeptide is Bifunctional protein PyrR (Bacillus thuringiensis subsp. konkukian (strain 97-27)).